A 650-amino-acid chain; its full sequence is Cytosolic Fe-S cluster assembly factor NAR1 (650 aa).

Positions 22, 81, 84, 87, 215, 270, 480, and 484 each coordinate [4Fe-4S] cluster.

The protein belongs to the NARF family.

Its function is as follows. Component of the cytosolic Fe/S protein assembly machinery. Required for maturation of extramitochondrial Fe/S proteins. May play a role in the transfer of pre-assembled Fe/S clusters to target apoproteins. The sequence is that of Cytosolic Fe-S cluster assembly factor NAR1 (NAR1) from Cryptococcus neoformans var. neoformans serotype D (strain JEC21 / ATCC MYA-565) (Filobasidiella neoformans).